The sequence spans 101 residues: Small ribosomal subunit protein uS14 (101 aa).

The protein belongs to the universal ribosomal protein uS14 family. As to quaternary structure, part of the 30S ribosomal subunit. Contacts proteins S3 and S10.

In terms of biological role, binds 16S rRNA, required for the assembly of 30S particles and may also be responsible for determining the conformation of the 16S rRNA at the A site. This chain is Small ribosomal subunit protein uS14, found in Cereibacter sphaeroides (strain ATCC 17029 / ATH 2.4.9) (Rhodobacter sphaeroides).